A 232-amino-acid chain; its full sequence is Phosphatidylserine decarboxylase proenzyme (232 aa).

The active-site Schiff-base intermediate with substrate; via pyruvic acid is the Ser190. Pyruvic acid (Ser); by autocatalysis is present on Ser190.

It belongs to the phosphatidylserine decarboxylase family. PSD-A subfamily. As to quaternary structure, heterodimer of a large membrane-associated beta subunit and a small pyruvoyl-containing alpha subunit. Pyruvate is required as a cofactor. In terms of processing, is synthesized initially as an inactive proenzyme. Formation of the active enzyme involves a self-maturation process in which the active site pyruvoyl group is generated from an internal serine residue via an autocatalytic post-translational modification. Two non-identical subunits are generated from the proenzyme in this reaction, and the pyruvate is formed at the N-terminus of the alpha chain, which is derived from the carboxyl end of the proenzyme. The post-translation cleavage follows an unusual pathway, termed non-hydrolytic serinolysis, in which the side chain hydroxyl group of the serine supplies its oxygen atom to form the C-terminus of the beta chain, while the remainder of the serine residue undergoes an oxidative deamination to produce ammonia and the pyruvoyl prosthetic group on the alpha chain.

It localises to the cell membrane. It catalyses the reaction a 1,2-diacyl-sn-glycero-3-phospho-L-serine + H(+) = a 1,2-diacyl-sn-glycero-3-phosphoethanolamine + CO2. It functions in the pathway phospholipid metabolism; phosphatidylethanolamine biosynthesis; phosphatidylethanolamine from CDP-diacylglycerol: step 2/2. Its function is as follows. Catalyzes the formation of phosphatidylethanolamine (PtdEtn) from phosphatidylserine (PtdSer). This chain is Phosphatidylserine decarboxylase proenzyme, found in Rhodopseudomonas palustris (strain BisA53).